The following is a 74-amino-acid chain: Kappa-scoloptoxin(07)-Ssm2f (74 aa).

Residues 1–19 (MLVFYAILFVTVFSNTVMG) form the signal peptide. Positions 20 to 41 (ATIDKPIPKPIFREAIEEMEVN) are excised as a propeptide.

The protein belongs to the scoloptoxin-07 family. Contains 3 disulfide bonds. In terms of tissue distribution, expressed by the venom gland.

It is found in the secreted. Inhibits voltage-gated potassium channels. In Scolopendra mutilans (Chinese red-headed centipede), this protein is Kappa-scoloptoxin(07)-Ssm2f.